Reading from the N-terminus, the 150-residue chain is Monothiol glutaredoxin-S13 (150 aa).

Positions 30–52 (PSSSSSSLSWLTSGSPKPTSISN) are disordered. Residues 31-44 (SSSSSSLSWLTSGS) are compositionally biased toward low complexity. Residues 53-149 (KRSSNLVVME…PTLRQAGALW (97 aa)) form the Glutaredoxin domain. Cys-73 lines the [2Fe-2S] cluster pocket. The Responsive for interaction with TGA factors signature appears at 147-150 (ALWL).

It belongs to the glutaredoxin family. CC-type subfamily.

It localises to the cytoplasm. It is found in the nucleus. May only reduce GSH-thiol disulfides, but not protein disulfides. In Arabidopsis thaliana (Mouse-ear cress), this protein is Monothiol glutaredoxin-S13 (GRXS13).